A 177-amino-acid polypeptide reads, in one-letter code: Inorganic pyrophosphatase (177 aa).

3 residues coordinate substrate: lysine 30, arginine 44, and tyrosine 56. Aspartate 66, aspartate 71, and aspartate 103 together coordinate Mg(2+). Tyrosine 142 contacts substrate.

Belongs to the PPase family. In terms of assembly, homohexamer. It depends on Mg(2+) as a cofactor.

It localises to the cytoplasm. The catalysed reaction is diphosphate + H2O = 2 phosphate + H(+). Catalyzes the hydrolysis of inorganic pyrophosphate (PPi) forming two phosphate ions. In Caulobacter vibrioides (strain ATCC 19089 / CIP 103742 / CB 15) (Caulobacter crescentus), this protein is Inorganic pyrophosphatase.